The following is a 440-amino-acid chain: Glutamyl-tRNA reductase (440 aa).

Residues 50 to 53 (TCNR), Ser109, 114 to 116 (EPQ), and Gln120 each bind substrate. Cys51 functions as the Nucleophile in the catalytic mechanism. Residue 189–194 (GAGEMA) coordinates NADP(+).

Belongs to the glutamyl-tRNA reductase family. As to quaternary structure, homodimer.

The catalysed reaction is (S)-4-amino-5-oxopentanoate + tRNA(Glu) + NADP(+) = L-glutamyl-tRNA(Glu) + NADPH + H(+). It participates in porphyrin-containing compound metabolism; protoporphyrin-IX biosynthesis; 5-aminolevulinate from L-glutamyl-tRNA(Glu): step 1/2. Functionally, catalyzes the NADPH-dependent reduction of glutamyl-tRNA(Glu) to glutamate 1-semialdehyde (GSA). This chain is Glutamyl-tRNA reductase, found in Nitratidesulfovibrio vulgaris (strain ATCC 29579 / DSM 644 / CCUG 34227 / NCIMB 8303 / VKM B-1760 / Hildenborough) (Desulfovibrio vulgaris).